Consider the following 546-residue polypeptide: MEGTMRCSANYVPLSPISFLERAAVVFGSRTSVVYGDIQYTWHQTRDRCVRLASALSDLGLSRHDVVAALAPNVPALCELYFGAPMAGAVLCVLNTTFDSQMLAMALEKTKPKVFFVDSEFLSVAEESLSLLSNIEEKPLIITITENPTEQSKYEQYEDFLSTGNPNFKPIRPVDECDPIALNFTSGTTSTPKCVVYSHRGAYLNATAVGVMNEMKPMPVYLCTVPMYHCSGWCYIWTVTAFGGVIVCLREVNDEVIFDSIVKHKVTNFGGSPPVLNMIANARDSVKKSFPWTVQVMSGGSSPPEVMLKLKKLGFKVMMAYGCSEVYGLGTACLWMPEWETLPEEESLRLKARDGLNHFAKEAVDVLDPTTMKSVPHDGKTIRVIALRGNTVMSGYFKDKEATEAAFRGGWYWSRDMGVIDPDGYIQFKDRSQDVITCGGEIVGSKEIEGILYSHPAVYDAGVVGRPDETLGESMCAFVKLKEGAEAREEEIIEFCKRKLGNKNMKMIPKTVVFSDVPKTPTGKIRKNVLRKMAKDMGYVQLRAVE.

The protein belongs to the ATP-dependent AMP-binding enzyme family.

Functionally, may act as an acid--thiol ligase that activates carboxylic acids by forming acyl-CoAs. The polypeptide is Probable acyl-activating enzyme 21 (AEE21) (Arabidopsis thaliana (Mouse-ear cress)).